The primary structure comprises 717 residues: Fatty acid oxidation complex subunit alpha (717 aa).

Residues 1–189 (MIYQSPTIEV…KVGAIDAVVA (189 aa)) are enoyl-CoA hydratase/isomerase. A substrate-binding site is contributed by D296. The tract at residues 311-717 (KKVNSAAVLG…ANNGSYYQQA (407 aa)) is 3-hydroxyacyl-CoA dehydrogenase. NAD(+) contacts are provided by residues M324, D343, 400 to 402 (VVE), K407, and S429. Residue H450 is the For 3-hydroxyacyl-CoA dehydrogenase activity of the active site. N453 serves as a coordination point for NAD(+). Residues N500 and Y660 each coordinate substrate.

This sequence in the N-terminal section; belongs to the enoyl-CoA hydratase/isomerase family. It in the C-terminal section; belongs to the 3-hydroxyacyl-CoA dehydrogenase family. As to quaternary structure, heterotetramer of two alpha chains (FadB) and two beta chains (FadA).

It catalyses the reaction a (3S)-3-hydroxyacyl-CoA + NAD(+) = a 3-oxoacyl-CoA + NADH + H(+). The enzyme catalyses a (3S)-3-hydroxyacyl-CoA = a (2E)-enoyl-CoA + H2O. It carries out the reaction a 4-saturated-(3S)-3-hydroxyacyl-CoA = a (3E)-enoyl-CoA + H2O. The catalysed reaction is (3S)-3-hydroxybutanoyl-CoA = (3R)-3-hydroxybutanoyl-CoA. It catalyses the reaction a (3Z)-enoyl-CoA = a 4-saturated (2E)-enoyl-CoA. The enzyme catalyses a (3E)-enoyl-CoA = a 4-saturated (2E)-enoyl-CoA. It functions in the pathway lipid metabolism; fatty acid beta-oxidation. In terms of biological role, involved in the aerobic and anaerobic degradation of long-chain fatty acids via beta-oxidation cycle. Catalyzes the formation of 3-oxoacyl-CoA from enoyl-CoA via L-3-hydroxyacyl-CoA. It can also use D-3-hydroxyacyl-CoA and cis-3-enoyl-CoA as substrate. The chain is Fatty acid oxidation complex subunit alpha from Shewanella pealeana (strain ATCC 700345 / ANG-SQ1).